A 243-amino-acid polypeptide reads, in one-letter code: Ribonuclease PH (243 aa).

Residues Arg-91 and 129-131 (GTR) contribute to the phosphate site.

This sequence belongs to the RNase PH family. Homohexameric ring arranged as a trimer of dimers.

The catalysed reaction is tRNA(n+1) + phosphate = tRNA(n) + a ribonucleoside 5'-diphosphate. Functionally, phosphorolytic 3'-5' exoribonuclease that plays an important role in tRNA 3'-end maturation. Removes nucleotide residues following the 3'-CCA terminus of tRNAs; can also add nucleotides to the ends of RNA molecules by using nucleoside diphosphates as substrates, but this may not be physiologically important. Probably plays a role in initiation of 16S rRNA degradation (leading to ribosome degradation) during starvation. In Burkholderia lata (strain ATCC 17760 / DSM 23089 / LMG 22485 / NCIMB 9086 / R18194 / 383), this protein is Ribonuclease PH.